The chain runs to 209 residues: Orotate phosphoribosyltransferase (209 aa).

5-phospho-alpha-D-ribose 1-diphosphate-binding positions include Arg-96, Lys-100, His-102, and 122-130 (EDLISTGGS). Ser-126 provides a ligand contact to orotate.

This sequence belongs to the purine/pyrimidine phosphoribosyltransferase family. PyrE subfamily. Homodimer. It depends on Mg(2+) as a cofactor.

It catalyses the reaction orotidine 5'-phosphate + diphosphate = orotate + 5-phospho-alpha-D-ribose 1-diphosphate. It participates in pyrimidine metabolism; UMP biosynthesis via de novo pathway; UMP from orotate: step 1/2. Its function is as follows. Catalyzes the transfer of a ribosyl phosphate group from 5-phosphoribose 1-diphosphate to orotate, leading to the formation of orotidine monophosphate (OMP). This chain is Orotate phosphoribosyltransferase, found in Lactococcus lactis subsp. lactis (strain IL1403) (Streptococcus lactis).